Reading from the N-terminus, the 352-residue chain is 4-hydroxy-3-methylbut-2-en-1-yl diphosphate synthase (flavodoxin) (352 aa).

Positions 265, 268, 300, and 307 each coordinate [4Fe-4S] cluster.

This sequence belongs to the IspG family. [4Fe-4S] cluster is required as a cofactor.

The catalysed reaction is (2E)-4-hydroxy-3-methylbut-2-enyl diphosphate + oxidized [flavodoxin] + H2O + 2 H(+) = 2-C-methyl-D-erythritol 2,4-cyclic diphosphate + reduced [flavodoxin]. Its pathway is isoprenoid biosynthesis; isopentenyl diphosphate biosynthesis via DXP pathway; isopentenyl diphosphate from 1-deoxy-D-xylulose 5-phosphate: step 5/6. Converts 2C-methyl-D-erythritol 2,4-cyclodiphosphate (ME-2,4cPP) into 1-hydroxy-2-methyl-2-(E)-butenyl 4-diphosphate. The protein is 4-hydroxy-3-methylbut-2-en-1-yl diphosphate synthase (flavodoxin) of Persephonella marina (strain DSM 14350 / EX-H1).